The sequence spans 298 residues: Homoserine kinase (298 aa).

An ATP-binding site is contributed by 92 to 102 (PLARGLGSSAT).

The protein belongs to the GHMP kinase family. Homoserine kinase subfamily.

It localises to the cytoplasm. It catalyses the reaction L-homoserine + ATP = O-phospho-L-homoserine + ADP + H(+). Its pathway is amino-acid biosynthesis; L-threonine biosynthesis; L-threonine from L-aspartate: step 4/5. Its function is as follows. Catalyzes the ATP-dependent phosphorylation of L-homoserine to L-homoserine phosphate. This is Homoserine kinase (thrB) from Nostoc sp. (strain PCC 7120 / SAG 25.82 / UTEX 2576).